Reading from the N-terminus, the 224-residue chain is Peroxiredoxin-6 (224 aa).

The Thioredoxin domain maps to 5–169 (LLLGDVAPNF…ILRVVISLQL (165 aa)). The segment at 31 to 40 (DSWGILFSHP) is required and sufficient for targeting to lysosomes and lamellar bodies. Phosphothreonine is present on T44. The active-site Cysteine sulfenic acid (-SOH) intermediate; for peroxidase activity is C47. N6-acetyllysine is present on K63. Y89 is modified (phosphotyrosine). The For phospholipase activity role is filled by D140. Phosphothreonine; by MAPK is present on T177. Position 209 is an N6-acetyllysine; alternate (K209). Position 209 is an N6-succinyllysine; alternate (K209).

It belongs to the peroxiredoxin family. Prx6 subfamily. In terms of assembly, homodimer. Interacts with GSTP1; mediates PRDX6 glutathionylation and regeneration. Interacts with APEX1. Interacts with STH. May interact with FAM168B. May interact with HTR2A. Irreversibly inactivated by overoxidation of Cys-47 to sulfinic acid (Cys-SO(2)H) and sulfonic acid (Cys-SO(3)H) forms upon oxidative stress. Post-translationally, phosphorylation at Thr-177 by MAP kinases increases the phospholipase activity of the enzyme. The phosphorylated form exhibits a greater lysophosphatidylcholine acyltransferase activity compared to the non-phosphorylated form.

The protein resides in the cytoplasm. It is found in the lysosome. The catalysed reaction is a hydroperoxide + 2 glutathione = an alcohol + glutathione disulfide + H2O. It carries out the reaction a 1,2-diacyl-sn-glycero-3-phosphocholine + H2O = a 1-acyl-sn-glycero-3-phosphocholine + a fatty acid + H(+). It catalyses the reaction a 1-acyl-sn-glycero-3-phosphocholine + an acyl-CoA = a 1,2-diacyl-sn-glycero-3-phosphocholine + CoA. The enzyme catalyses 1-hexadecanoyl-sn-glycero-3-phosphocholine + hexadecanoyl-CoA = 1,2-dihexadecanoyl-sn-glycero-3-phosphocholine + CoA. The catalysed reaction is 1,2-dihexadecanoyl-sn-glycero-3-phosphocholine + H2O = 1-hexadecanoyl-sn-glycero-3-phosphocholine + hexadecanoate + H(+). In terms of biological role, thiol-specific peroxidase that catalyzes the reduction of hydrogen peroxide and organic hydroperoxides to water and alcohols, respectively. Can reduce H(2)O(2) and short chain organic, fatty acid, and phospholipid hydroperoxides. Also has phospholipase activity, and can therefore either reduce the oxidized sn-2 fatty acyl group of phospholipids (peroxidase activity) or hydrolyze the sn-2 ester bond of phospholipids (phospholipase activity). These activities are dependent on binding to phospholipids at acidic pH and to oxidized phospholipds at cytosolic pH. Plays a role in cell protection against oxidative stress by detoxifying peroxides and in phospholipid homeostasis. Exhibits acyl-CoA-dependent lysophospholipid acyltransferase which mediates the conversion of lysophosphatidylcholine (1-acyl-sn-glycero-3-phosphocholine or LPC) into phosphatidylcholine (1,2-diacyl-sn-glycero-3-phosphocholine or PC). Shows a clear preference for LPC as the lysophospholipid and for palmitoyl CoA as the fatty acyl substrate. This Pongo abelii (Sumatran orangutan) protein is Peroxiredoxin-6 (PRDX6).